The following is a 162-amino-acid chain: UPF0262 protein Acry_0160 (162 aa).

This sequence belongs to the UPF0262 family.

The chain is UPF0262 protein Acry_0160 from Acidiphilium cryptum (strain JF-5).